Here is a 274-residue protein sequence, read N- to C-terminus: tRNA-cytidine(32) 2-sulfurtransferase (274 aa).

The PP-loop motif signature appears at 40–45; sequence SGGKDS. Cys-115, Cys-118, and Cys-206 together coordinate [4Fe-4S] cluster.

The protein belongs to the TtcA family. Homodimer. It depends on Mg(2+) as a cofactor. Requires [4Fe-4S] cluster as cofactor.

The protein localises to the cytoplasm. It catalyses the reaction cytidine(32) in tRNA + S-sulfanyl-L-cysteinyl-[cysteine desulfurase] + AH2 + ATP = 2-thiocytidine(32) in tRNA + L-cysteinyl-[cysteine desulfurase] + A + AMP + diphosphate + H(+). It functions in the pathway tRNA modification. Functionally, catalyzes the ATP-dependent 2-thiolation of cytidine in position 32 of tRNA, to form 2-thiocytidine (s(2)C32). The sulfur atoms are provided by the cysteine/cysteine desulfurase (IscS) system. In Pseudomonas entomophila (strain L48), this protein is tRNA-cytidine(32) 2-sulfurtransferase.